The primary structure comprises 314 residues: Methionyl-tRNA formyltransferase (314 aa).

110-113 (SLLP) provides a ligand contact to (6S)-5,6,7,8-tetrahydrofolate.

It belongs to the Fmt family.

The enzyme catalyses L-methionyl-tRNA(fMet) + (6R)-10-formyltetrahydrofolate = N-formyl-L-methionyl-tRNA(fMet) + (6S)-5,6,7,8-tetrahydrofolate + H(+). In terms of biological role, attaches a formyl group to the free amino group of methionyl-tRNA(fMet). The formyl group appears to play a dual role in the initiator identity of N-formylmethionyl-tRNA by promoting its recognition by IF2 and preventing the misappropriation of this tRNA by the elongation apparatus. This chain is Methionyl-tRNA formyltransferase, found in Bacillus cereus (strain G9842).